The primary structure comprises 371 residues: Capsular polysaccharide phosphotransferase cps12A (371 aa).

It belongs to the stealth family.

In terms of biological role, part of a capsular polysaccharide synthesis locus. The polypeptide is Capsular polysaccharide phosphotransferase cps12A (cps12A) (Actinobacillus pleuropneumoniae (Haemophilus pleuropneumoniae)).